We begin with the raw amino-acid sequence, 534 residues long: Alkaline serine exoprotease A (534 aa).

A signal peptide spans 1-21; sequence MLKKLLSCCITSALCFHSSLA. Positions 22–141 are excised as a propeptide; the sequence is FSQPNEIADS…LSLDPIVSAD (120 aa). Residues 57-134 enclose the Inhibitor I9 domain; it reads RYIVVFQQPQ…YIEQDRILSL (78 aa). The Peptidase S8 domain occupies 148–419; the sequence is IWGLDRIDQR…KLLYSLTDAD (272 aa). Active-site charge relay system residues include aspartate 180, histidine 213, and serine 363. The tract at residues 423-442 is disordered; it reads DCGGPDPTPDPEGKLTSGVP.

Belongs to the peptidase S8 family.

This is Alkaline serine exoprotease A (proA) from Vibrio alginolyticus.